The primary structure comprises 622 residues: Chaperone protein HscA homolog (622 aa).

It belongs to the heat shock protein 70 family.

In terms of biological role, chaperone involved in the maturation of iron-sulfur cluster-containing proteins. Has a low intrinsic ATPase activity which is markedly stimulated by HscB. The sequence is that of Chaperone protein HscA homolog from Burkholderia cenocepacia (strain ATCC BAA-245 / DSM 16553 / LMG 16656 / NCTC 13227 / J2315 / CF5610) (Burkholderia cepacia (strain J2315)).